The following is a 48-amino-acid chain: Photosystem II reaction center protein K (48 aa).

Positions 1–11 (MFPSTNQEVLA) are excised as a propeptide. The chain crosses the membrane as a helical span at residues 23-43 (IVDVLPIIPLLFLLLAFVWQA).

Belongs to the PsbK family. PSII is composed of 1 copy each of membrane proteins PsbA, PsbB, PsbC, PsbD, PsbE, PsbF, PsbH, PsbI, PsbJ, PsbK, PsbL, PsbM, PsbT, PsbY, PsbZ, Psb30/Ycf12, at least 3 peripheral proteins of the oxygen-evolving complex and a large number of cofactors. It forms dimeric complexes.

It localises to the plastid. It is found in the chloroplast thylakoid membrane. Functionally, one of the components of the core complex of photosystem II (PSII). PSII is a light-driven water:plastoquinone oxidoreductase that uses light energy to abstract electrons from H(2)O, generating O(2) and a proton gradient subsequently used for ATP formation. It consists of a core antenna complex that captures photons, and an electron transfer chain that converts photonic excitation into a charge separation. The protein is Photosystem II reaction center protein K of Euglena sanguinea.